Here is a 233-residue protein sequence, read N- to C-terminus: Small ribosomal subunit protein uS3 (233 aa).

One can recognise a KH type-2 domain in the interval 39–107; sequence VRKYLTKELE…PAQINIAEVR (69 aa). Residues 214–233 are disordered; sequence VEQPEKPSAQPKKQQRKGRK.

The protein belongs to the universal ribosomal protein uS3 family. In terms of assembly, part of the 30S ribosomal subunit. Forms a tight complex with proteins S10 and S14.

Binds the lower part of the 30S subunit head. Binds mRNA in the 70S ribosome, positioning it for translation. This Pectobacterium atrosepticum (strain SCRI 1043 / ATCC BAA-672) (Erwinia carotovora subsp. atroseptica) protein is Small ribosomal subunit protein uS3.